A 329-amino-acid chain; its full sequence is MTVTIYDVAREARVSMATVSRVVNGNQNVKPETRDKVNEVIKKLNYRPNAVARGLASKRTTTVGVIIPDISNVYYSQLARGLEDIATMYKYHSIISNSDNDPSKEKEIFNNLLSKQVDGIIFLGGTISEEIKDLINKSSVPVVVSGTNGKDEGISSVNIDFESAAKEITEHLIEKGAKSFAFVGGDYSKKAQEDVLVGLKDVLVQHELELDEQLIFNGNETYKDGLRAFESLATAKPDAILSISDEQAIGLVHAAQDAGVNVPNDLQIVSFNNTRLVEMVRPQLSSVIQPLYDIGAVGMRLLTKYMNEEDIDEPNVILPHRIEYRGTTK.

The HTH lacI-type domain maps to 1–57 (MTVTIYDVAREARVSMATVSRVVNGNQNVKPETRDKVNEVIKKLNYRPNAVARGLAS). The segment at residues 5–24 (IYDVAREARVSMATVSRVVN) is a DNA-binding region (H-T-H motif).

In terms of biological role, global transcriptional regulator of carbon catabolite repression (CCR) and carbon catabolite activation (CCA), which ensures optimal energy usage under diverse conditions. This Staphylococcus xylosus protein is Catabolite control protein A (ccpA).